The chain runs to 299 residues: Tyrosine recombinase XerC (299 aa).

The 87-residue stretch at 2–88 folds into the Core-binding (CB) domain; it reads SALQPLIDTY…ALRSFLDYLV (87 aa). In terms of domain architecture, Tyr recombinase spans 109 to 289; the sequence is PLPKNVSVDD…DFQHLSKIYD (181 aa). Active-site residues include R148, K172, H241, R244, and H267. The active-site O-(3'-phospho-DNA)-tyrosine intermediate is Y276.

The protein belongs to the 'phage' integrase family. XerC subfamily. As to quaternary structure, forms a cyclic heterotetrameric complex composed of two molecules of XerC and two molecules of XerD.

Its subcellular location is the cytoplasm. Functionally, site-specific tyrosine recombinase, which acts by catalyzing the cutting and rejoining of the recombining DNA molecules. The XerC-XerD complex is essential to convert dimers of the bacterial chromosome into monomers to permit their segregation at cell division. It also contributes to the segregational stability of plasmids. The chain is Tyrosine recombinase XerC from Psychromonas ingrahamii (strain DSM 17664 / CCUG 51855 / 37).